Reading from the N-terminus, the 398-residue chain is Aurofusarin biosynthesis regulatory protein aurR1 (398 aa).

Residues 18–45 (CDNCAKSKVRCGKEQPWCQRCERRGQVC) constitute a DNA-binding region (zn(2)-C6 fungal-type). 2 disordered regions span residues 52-73 (RSRK…GTPP) and 275-314 (AATI…SSLI). Composition is skewed to basic and acidic residues over residues 56-67 (RTLDAAHPESDQ) and 289-298 (DGKDTERSVS). The span at 299–311 (RDTNVSQDGSEPS) shows a compositional bias: polar residues.

It is found in the nucleus. In terms of biological role, transcription factor that specifically regulates the expression of the gene cluster that mediates the biosynthesis of aurofusarin, a red mycelium pigment which is acting as a mycotoxin. The polypeptide is Aurofusarin biosynthesis regulatory protein aurR1 (Gibberella zeae (strain ATCC MYA-4620 / CBS 123657 / FGSC 9075 / NRRL 31084 / PH-1) (Wheat head blight fungus)).